Here is a 65-residue protein sequence, read N- to C-terminus: Large ribosomal subunit protein bL35 (65 aa).

This sequence belongs to the bacterial ribosomal protein bL35 family.

The protein is Large ribosomal subunit protein bL35 of Synechococcus sp. (strain CC9605).